The following is an 80-amino-acid chain: MTMDDTKATVLSILADLTGEDVSSNMDVNLFDEGILDSMGSVQLLLELQNQLGIEVPVSEFQRSEWDTPAKIVAKVENLQ.

The 80-residue stretch at 1 to 80 (MTMDDTKATV…KIVAKVENLQ (80 aa)) folds into the Carrier domain. Residue Ser38 is modified to O-(pantetheine 4'-phosphoryl)serine.

This sequence belongs to the DltC family. Post-translationally, 4'-phosphopantetheine is transferred from CoA to a specific serine of apo-DCP.

Its subcellular location is the cytoplasm. It participates in cell wall biogenesis; lipoteichoic acid biosynthesis. Carrier protein involved in the D-alanylation of lipoteichoic acid (LTA). The loading of thioester-linked D-alanine onto DltC is catalyzed by D-alanine--D-alanyl carrier protein ligase DltA. The DltC-carried D-alanyl group is further transferred to cell membrane phosphatidylglycerol (PG) by forming an ester bond, probably catalyzed by DltD. D-alanylation of LTA plays an important role in modulating the properties of the cell wall in Gram-positive bacteria, influencing the net charge of the cell wall. The protein is D-alanyl carrier protein 1 of Lactiplantibacillus plantarum (strain ATCC BAA-793 / NCIMB 8826 / WCFS1) (Lactobacillus plantarum).